We begin with the raw amino-acid sequence, 328 residues long: Malate dehydrogenase (328 aa).

Position 11-17 (11-17 (GAAGQIG)) interacts with NAD(+). Substrate-binding residues include Arg94 and Arg100. NAD(+) is bound by residues Asn107, Gln114, and 131 to 133 (VGN). Residues Asn133 and Arg164 each contribute to the substrate site. His189 serves as the catalytic Proton acceptor.

The protein belongs to the LDH/MDH superfamily. MDH type 2 family.

The catalysed reaction is (S)-malate + NAD(+) = oxaloacetate + NADH + H(+). Functionally, catalyzes the reversible oxidation of malate to oxaloacetate. The sequence is that of Malate dehydrogenase from Acinetobacter baumannii (strain AB0057).